A 661-amino-acid polypeptide reads, in one-letter code: Arginine--tRNA ligase, cytoplasmic (661 aa).

The residue at position 1 (Met1) is an N-acetylmethionine. Positions 1-73 are could be involved in the assembly of the multisynthetase complex; the sequence is MDGLVAQCSA…AEKRRRPTKN (73 aa). L-arginine contacts are provided by residues 201–203, His212, Tyr385, Asp389, and Gln413; that span reads SPN. The 'HIGH' region motif lies at 202–213; it reads PNIAKEMHVGHL. The interval 530–544 is interaction with tRNA; that stretch reads NTAAYLLYAFTRIRS.

It belongs to the class-I aminoacyl-tRNA synthetase family. In terms of assembly, interacts (via N-terminus) with AIMP1 (via N-terminus); this stimulates its catalytic activity. Interacts (via N-terminus) with LARS2 (via C-terminus). Monomer. Part of a multisubunit complex that groups tRNA ligases for Arg (RARS1), Asp (DARS1), Gln (QARS1), Ile (IARS1), Leu (LARS1), Lys (KARS1), Met (MARS1) the bifunctional ligase for Glu and Pro (EPRS1) and the auxiliary subunits AIMP1/p43, AIMP2/p38 and EEF1E1/p18. Interacts with QARS1. Part of a complex composed of RARS1, QARS1 and AIMP1.

It localises to the cytoplasm. It is found in the cytosol. It carries out the reaction tRNA(Arg) + L-arginine + ATP = L-arginyl-tRNA(Arg) + AMP + diphosphate. Functionally, forms part of a macromolecular complex that catalyzes the attachment of specific amino acids to cognate tRNAs during protein synthesis. Modulates the secretion of AIMP1 and may be involved in generation of the inflammatory cytokine EMAP2 from AIMP1. The sequence is that of Arginine--tRNA ligase, cytoplasmic (RARS1) from Cricetulus griseus (Chinese hamster).